We begin with the raw amino-acid sequence, 366 residues long: MQLLTLPPSPTLATSIRATAQVFEDPRSQALLAHLQQVAPSEASVLIIGETGTGKELVARHIHNLSGRRNGPFVAVNCGAFSESLVEAELFGHEKGAFTGALAAKAGWFEEANGGTLFLDEIGDLPLPIQVKLLRVLQEREVVRLGSRKSIPINVRVLAATNVQLEKAINAGHFREDLYYRLNVVTLQLHPLRDRPGDILPLARHFIRSYSDRLGYGPVELSAKAQAKLVEYSWPGNIRELENVIHHSLLTCGDGTVQAQDLRLSNLRIERQEEEPAGNGVEDLLQRAFSRLYEEQSGDLYEKVENALLRSAYRFCHYNQVHTAQLLGLSRNITRTRLIAIGELVVNKRRGQEQQVLDNRVVRLSI.

A Sigma-54 factor interaction domain is found at 21–250 (QVFEDPRSQA…LENVIHHSLL (230 aa)). ATP contacts are provided by residues 49–56 (GETGTGKE) and 112–121 (ANGGTLFLDE).

Involved in the dimethyl sulfide degradation pathway. Activates the expression of sfnG and sfnF. The chain is Sigma54-dependent transcriptional activator SfnR from Pseudomonas putida (Arthrobacter siderocapsulatus).